The primary structure comprises 124 residues: Putative ankyrin repeat protein RF_1087 (124 aa).

3 ANK repeats span residues 17-46 (NDQK…NPNI), 50-79 (NGET…IIDS), and 83-112 (FERT…TIGN).

In Rickettsia felis (strain ATCC VR-1525 / URRWXCal2) (Rickettsia azadi), this protein is Putative ankyrin repeat protein RF_1087.